A 217-amino-acid chain; its full sequence is Probable transaldolase (217 aa).

The Schiff-base intermediate with substrate role is filled by Lys-83.

Belongs to the transaldolase family. Type 3B subfamily.

It is found in the cytoplasm. The enzyme catalyses D-sedoheptulose 7-phosphate + D-glyceraldehyde 3-phosphate = D-erythrose 4-phosphate + beta-D-fructose 6-phosphate. Its pathway is carbohydrate degradation; pentose phosphate pathway; D-glyceraldehyde 3-phosphate and beta-D-fructose 6-phosphate from D-ribose 5-phosphate and D-xylulose 5-phosphate (non-oxidative stage): step 2/3. Its function is as follows. Transaldolase is important for the balance of metabolites in the pentose-phosphate pathway. This Coprothermobacter proteolyticus (strain ATCC 35245 / DSM 5265 / OCM 4 / BT) protein is Probable transaldolase.